The following is a 256-amino-acid chain: Metallo-beta-lactamase type 2 (256 aa).

The signal sequence occupies residues 1 to 29 (MKNTLLKLGVCVSLLGITPFVSTISSVQA). Histidine 115, histidine 117, aspartate 119, histidine 178, and cysteine 197 together coordinate Zn(2+). 2 residues coordinate substrate: lysine 200 and asparagine 209. Histidine 239 provides a ligand contact to Zn(2+).

The protein belongs to the metallo-beta-lactamase superfamily. Class-B beta-lactamase family. Monomer. Zn(2+) is required as a cofactor.

The protein resides in the periplasm. It catalyses the reaction a beta-lactam + H2O = a substituted beta-amino acid. Inhibited by chelating agents such as EDTA. Its function is as follows. Confers resistance to the different beta-lactams antibiotics (penicillin, cephalosporin and carbapenem) via the hydrolysis of the beta-lactam ring. Benzylpenicillin is a better substrate than cephalosporin C and ampicillin. The protein is Metallo-beta-lactamase type 2 of Bacillus cereus.